The sequence spans 250 residues: Methionine aminopeptidase (250 aa).

His77 serves as a coordination point for substrate. 3 residues coordinate a divalent metal cation: Asp95, Asp106, and His169. A substrate-binding site is contributed by His176. A divalent metal cation contacts are provided by Glu202 and Glu233.

Belongs to the peptidase M24A family. Methionine aminopeptidase type 1 subfamily. As to quaternary structure, monomer. Co(2+) serves as cofactor. Requires Zn(2+) as cofactor. It depends on Mn(2+) as a cofactor. The cofactor is Fe(2+).

The catalysed reaction is Release of N-terminal amino acids, preferentially methionine, from peptides and arylamides.. Its function is as follows. Removes the N-terminal methionine from nascent proteins. The N-terminal methionine is often cleaved when the second residue in the primary sequence is small and uncharged (Met-Ala-, Cys, Gly, Pro, Ser, Thr, or Val). Requires deformylation of the N(alpha)-formylated initiator methionine before it can be hydrolyzed. The sequence is that of Methionine aminopeptidase from Clostridium acetobutylicum (strain ATCC 824 / DSM 792 / JCM 1419 / IAM 19013 / LMG 5710 / NBRC 13948 / NRRL B-527 / VKM B-1787 / 2291 / W).